The following is a 333-amino-acid chain: Protein-methionine-sulfoxide reductase catalytic subunit MsrP (333 aa).

The segment at residues 1–43 (MHKHRKPTEADVTPESLFYQRRRVLKALGISAAALSLPLSAQA) is a signal peptide (tat-type signal). Mo-molybdopterin contacts are provided by residues asparagine 87, 90-91 (YE), cysteine 145, threonine 180, asparagine 232, arginine 237, and 248-250 (NIK).

This sequence belongs to the MsrP family. In terms of assembly, heterodimer of a catalytic subunit (MsrP) and a heme-binding subunit (MsrQ). Mo-molybdopterin serves as cofactor. In terms of processing, predicted to be exported by the Tat system. The position of the signal peptide cleavage has not been experimentally proven.

The protein localises to the periplasm. It catalyses the reaction L-methionyl-[protein] + a quinone + H2O = L-methionyl-(S)-S-oxide-[protein] + a quinol. The enzyme catalyses L-methionyl-[protein] + a quinone + H2O = L-methionyl-(R)-S-oxide-[protein] + a quinol. In terms of biological role, part of the MsrPQ system that repairs oxidized periplasmic proteins containing methionine sulfoxide residues (Met-O), using respiratory chain electrons. Thus protects these proteins from oxidative-stress damage caused by reactive species of oxygen and chlorine generated by the host defense mechanisms. MsrPQ is essential for the maintenance of envelope integrity under bleach stress, rescuing a wide series of structurally unrelated periplasmic proteins from methionine oxidation. The catalytic subunit MsrP is non-stereospecific, being able to reduce both (R-) and (S-) diastereoisomers of methionine sulfoxide. The protein is Protein-methionine-sulfoxide reductase catalytic subunit MsrP of Pectobacterium atrosepticum (strain SCRI 1043 / ATCC BAA-672) (Erwinia carotovora subsp. atroseptica).